The sequence spans 234 residues: Leucyl/phenylalanyl-tRNA--protein transferase (234 aa).

This sequence belongs to the L/F-transferase family.

It localises to the cytoplasm. The catalysed reaction is N-terminal L-lysyl-[protein] + L-leucyl-tRNA(Leu) = N-terminal L-leucyl-L-lysyl-[protein] + tRNA(Leu) + H(+). It catalyses the reaction N-terminal L-arginyl-[protein] + L-leucyl-tRNA(Leu) = N-terminal L-leucyl-L-arginyl-[protein] + tRNA(Leu) + H(+). The enzyme catalyses L-phenylalanyl-tRNA(Phe) + an N-terminal L-alpha-aminoacyl-[protein] = an N-terminal L-phenylalanyl-L-alpha-aminoacyl-[protein] + tRNA(Phe). Functionally, functions in the N-end rule pathway of protein degradation where it conjugates Leu, Phe and, less efficiently, Met from aminoacyl-tRNAs to the N-termini of proteins containing an N-terminal arginine or lysine. The chain is Leucyl/phenylalanyl-tRNA--protein transferase from Syntrophobacter fumaroxidans (strain DSM 10017 / MPOB).